We begin with the raw amino-acid sequence, 565 residues long: Estrogen receptor gamma (565 aa).

Residues 1-168 form a modulating region; it reads MAVASSPEKD…TSGGKTDLHY (168 aa). 2 NR C4-type zinc fingers span residues 169-189 and 205-229; these read CAVC…CEGC and CPAT…LRKC. The segment at residues 169–234 is a DNA-binding region (nuclear receptor); the sequence is CAVCHDYASG…RLRKCYEVGM (66 aa). The tract at residues 235-285 is hinge; that stretch reads TKCGMRKERGNYRSPQMRRMTRLTSQGRTDSSSVLTGSAVVSLNAPQPSAL. The NR LBD domain occupies 286–516; it reads TSEQLIERLM…DLLLEMLDAH (231 aa). Residues 522–565 form a disordered region; the sequence is RLPRRSPEQEPEDQADAPAPPHSSGSGPSYTWTPSSSEGAGEPQ.

It belongs to the nuclear hormone receptor family. NR3 subfamily. In terms of assembly, homodimer. Abundant in the ovary and testes, barely detectable in the brain and muscle and undetectable in the liver.

The protein localises to the nucleus. The steroid hormones and their receptors are involved in the regulation of eukaryotic gene expression and affect cellular proliferation and differentiation in target tissues. This Micropogonias undulatus (Atlantic croaker) protein is Estrogen receptor gamma (esr3).